A 281-amino-acid chain; its full sequence is MDTEFLRTLDRQILLGVFVAFVAVGAGAAYFLTSSKKRRVCLDPENFKEFKLVKRHQLSHNVAKFVFELPTSTSVLGLPIGQHISCRGKDGQGEDVIKPYTPTTLDSDVGRFELVIKMYPQGRMSHHFREMRVGDHLAVKGPKGRFKYQPGQFRAFGMLAGGSGITPMFQVARAILENPTDKTKVHLIYANVTYDDILLKEELEGLTTNYPEQFKIFYVLNQPPEVWDGGVGFVSKEMIQTHCPAPASDIQILRCGPPPMNKAMAANLEALGYSPEMQFQF.

The chain crosses the membrane as a helical span at residues 13-33 (ILLGVFVAFVAVGAGAAYFLT). Residues 34–40 (SSKKRRV) carry the AKR2A-binding sequence (ABS) required for mitochondrion outer membrane targeting motif. The FAD-binding FR-type domain occupies 45-149 (ENFKEFKLVK…KGPKGRFKYQ (105 aa)). FAD-binding positions include 129 to 144 (REMR…GPKG) and 155 to 187 (AFGM…KVHL). Threonine 166 is subject to Phosphothreonine.

The protein belongs to the flavoprotein pyridine nucleotide cytochrome reductase family. Monomer. Interacts with AKR2A. Requires FAD as cofactor. In terms of tissue distribution, expressed in roots, stems, flowers and siliques. Detected in leaves.

The protein resides in the mitochondrion outer membrane. The enzyme catalyses 2 Fe(III)-[cytochrome b5] + NADH = 2 Fe(II)-[cytochrome b5] + NAD(+) + H(+). Its function is as follows. Reductase transferring electrons from NADH to cytochrome b5. Required for the NADH-dependent electron transfer involved in the desaturation and hydroxylation of fatty acids and in the desaturation of sterol precursors. No activity with NADPH as electron donor. This is NADH--cytochrome b5 reductase 1 from Arabidopsis thaliana (Mouse-ear cress).